A 137-amino-acid polypeptide reads, in one-letter code: Small ribosomal subunit protein uS12 (137 aa).

The protein belongs to the universal ribosomal protein uS12 family. As to quaternary structure, part of the 30S ribosomal subunit. Contacts proteins S8 and S17. May interact with IF1 in the 30S initiation complex.

Its function is as follows. With S4 and S5 plays an important role in translational accuracy. Functionally, interacts with and stabilizes bases of the 16S rRNA that are involved in tRNA selection in the A site and with the mRNA backbone. Located at the interface of the 30S and 50S subunits, it traverses the body of the 30S subunit contacting proteins on the other side and probably holding the rRNA structure together. The combined cluster of proteins S8, S12 and S17 appears to hold together the shoulder and platform of the 30S subunit. This Lactiplantibacillus plantarum (strain ATCC BAA-793 / NCIMB 8826 / WCFS1) (Lactobacillus plantarum) protein is Small ribosomal subunit protein uS12.